A 515-amino-acid chain; its full sequence is Bifunctional purine biosynthesis protein PurH (515 aa).

The region spanning 1-145 (MTKRALISVS…KNHASVTVVV (145 aa)) is the MGS-like domain.

Belongs to the PurH family.

It catalyses the reaction (6R)-10-formyltetrahydrofolate + 5-amino-1-(5-phospho-beta-D-ribosyl)imidazole-4-carboxamide = 5-formamido-1-(5-phospho-D-ribosyl)imidazole-4-carboxamide + (6S)-5,6,7,8-tetrahydrofolate. The catalysed reaction is IMP + H2O = 5-formamido-1-(5-phospho-D-ribosyl)imidazole-4-carboxamide. It participates in purine metabolism; IMP biosynthesis via de novo pathway; 5-formamido-1-(5-phospho-D-ribosyl)imidazole-4-carboxamide from 5-amino-1-(5-phospho-D-ribosyl)imidazole-4-carboxamide (10-formyl THF route): step 1/1. Its pathway is purine metabolism; IMP biosynthesis via de novo pathway; IMP from 5-formamido-1-(5-phospho-D-ribosyl)imidazole-4-carboxamide: step 1/1. This Streptococcus equi subsp. equi (strain 4047) protein is Bifunctional purine biosynthesis protein PurH.